A 1350-amino-acid polypeptide reads, in one-letter code: Nicotinate hydroxylase hnxS (1350 aa).

[2Fe-2S] cluster is bound by residues cysteine 49, cysteine 54, cysteine 89, cysteine 92, cysteine 133, and cysteine 135. A disordered region spans residues 164-193 (LVGTEEETESDMGAHSGSGDTGSRSSGSCG). Residues 180-192 (GSGDTGSRSSGSC) are compositionally biased toward low complexity. The FAD-binding PCMH-type domain occupies 256 to 445 (YGDAEQAWVK…TKIAVPMPSK (190 aa)). FAD is bound by residues 284–291 (LVTGASEV), 379–383 (CLAGN), aspartate 392, and lysine 455. Mo-molybdopterin-binding residues include glutamine 793 and phenylalanine 824. Substrate is bound by residues glutamate 828 and arginine 906. Positions 938 and 1107 each coordinate Mo-molybdopterin. The Proton acceptor role is filled by glutamate 1281.

It belongs to the xanthine dehydrogenase family. Requires [2Fe-2S] cluster as cofactor. The cofactor is FAD. Mo-molybdopterin is required as a cofactor.

Allopurinol inhibits catalytic activity in a linear fashion. In terms of biological role, nicotinate hydroxylase, part of the hnx cluster involved in the purine degradation. The nicotinate hydroxylase hnxS accepts nicotinate as a substrate and catalyzes the first step of nicotinate catabolism. HnxS also accepts hypoxanthine, but not xanthine, as a substrate. The major facilitator-type transporters hxnP and hxnZ are probably involved in the uptake of nicotinate-derived metabolites, and the oxidoreductases hxnT and hxnY in the further metabolism of 6-OH nicotinic acid. The polypeptide is Nicotinate hydroxylase hnxS (Emericella nidulans (strain FGSC A4 / ATCC 38163 / CBS 112.46 / NRRL 194 / M139) (Aspergillus nidulans)).